The following is a 107-amino-acid chain: Nucleoid-associated protein PPA0205 (107 aa).

It belongs to the YbaB/EbfC family. In terms of assembly, homodimer.

It is found in the cytoplasm. Its subcellular location is the nucleoid. Its function is as follows. Binds to DNA and alters its conformation. May be involved in regulation of gene expression, nucleoid organization and DNA protection. In Cutibacterium acnes (strain DSM 16379 / KPA171202) (Propionibacterium acnes), this protein is Nucleoid-associated protein PPA0205.